Consider the following 500-residue polypeptide: Glutamate decarboxylase 3 (500 aa).

The residue at position 8 (Ser-8) is a Phosphoserine. Lys-277 is subject to N6-(pyridoxal phosphate)lysine.

This sequence belongs to the group II decarboxylase family. Homohexamer. Interacts with calmodulin. It depends on pyridoxal 5'-phosphate as a cofactor. In terms of tissue distribution, expressed at low levels in siliques.

It carries out the reaction L-glutamate + H(+) = 4-aminobutanoate + CO2. Functionally, catalyzes the production of GABA. The calmodulin-binding is calcium-dependent and it is proposed that this may, directly or indirectly, form a calcium regulated control of GABA biosynthesis. This Arabidopsis thaliana (Mouse-ear cress) protein is Glutamate decarboxylase 3 (GAD3).